Consider the following 79-residue polypeptide: Putative Fis-like DNA-binding protein (79 aa).

The segment at residues 55 to 74 (QSKASVMLGLNRNTLRKKLI) is a DNA-binding region (H-T-H motif).

Belongs to the transcriptional regulatory Fis family.

The sequence is that of Putative Fis-like DNA-binding protein from Neisseria meningitidis serogroup A / serotype 4A (strain DSM 15465 / Z2491).